We begin with the raw amino-acid sequence, 254 residues long: UPF0246 protein FTH_1656 (254 aa).

It belongs to the UPF0246 family.

This Francisella tularensis subsp. holarctica (strain OSU18) protein is UPF0246 protein FTH_1656.